The following is a 674-amino-acid chain: Translation initiation factor IF-2 (674 aa).

In terms of domain architecture, tr-type G spans 174–344 (IRPPVVTVMG…LLVAELREIK (171 aa)). The segment at 183-190 (GHVDHGKT) is G1. 183–190 (GHVDHGKT) is a binding site for GTP. A G2 region spans residues 208 to 212 (GITQS). Residues 229–232 (DTPG) form a G3 region. GTP-binding positions include 229–233 (DTPGH) and 283–286 (NKID). The tract at residues 283–286 (NKID) is G4. The segment at 320–322 (SAR) is G5.

It belongs to the TRAFAC class translation factor GTPase superfamily. Classic translation factor GTPase family. IF-2 subfamily.

It localises to the cytoplasm. In terms of biological role, one of the essential components for the initiation of protein synthesis. Protects formylmethionyl-tRNA from spontaneous hydrolysis and promotes its binding to the 30S ribosomal subunits. Also involved in the hydrolysis of GTP during the formation of the 70S ribosomal complex. This is Translation initiation factor IF-2 from Pseudothermotoga lettingae (strain ATCC BAA-301 / DSM 14385 / NBRC 107922 / TMO) (Thermotoga lettingae).